The sequence spans 228 residues: Abnormal cell migration protein 18 (228 aa).

The N-terminal stretch at 1 to 19 is a signal peptide; the sequence is MTFTLRLLVLCTVYSYVIS. 2 N-linked (GlcNAc...) asparagine glycosylation sites follow: N135 and N159.

In terms of tissue distribution, expressed in body wall muscle.

It localises to the secreted. It is found in the extracellular space. The protein localises to the extracellular matrix. The protein resides in the basement membrane. Functionally, required for the directional control of distal tip cell migration during gonadogenesis, probably by recruiting fibulin fbl-1 to the gonad basement membrane. This chain is Abnormal cell migration protein 18, found in Caenorhabditis elegans.